The primary structure comprises 388 residues: Phosphopentomutase (388 aa).

The Mn(2+) site is built by aspartate 10, aspartate 282, histidine 287, aspartate 323, histidine 324, and histidine 335.

Belongs to the phosphopentomutase family. Mn(2+) serves as cofactor.

Its subcellular location is the cytoplasm. It catalyses the reaction 2-deoxy-alpha-D-ribose 1-phosphate = 2-deoxy-D-ribose 5-phosphate. The catalysed reaction is alpha-D-ribose 1-phosphate = D-ribose 5-phosphate. Its pathway is carbohydrate degradation; 2-deoxy-D-ribose 1-phosphate degradation; D-glyceraldehyde 3-phosphate and acetaldehyde from 2-deoxy-alpha-D-ribose 1-phosphate: step 1/2. Isomerase that catalyzes the conversion of deoxy-ribose 1-phosphate (dRib-1-P) and ribose 1-phosphate (Rib-1-P) to deoxy-ribose 5-phosphate (dRib-5-P) and ribose 5-phosphate (Rib-5-P), respectively. This is Phosphopentomutase from Carboxydothermus hydrogenoformans (strain ATCC BAA-161 / DSM 6008 / Z-2901).